The chain runs to 863 residues: Potassium/sodium hyperpolarization-activated cyclic nucleotide-gated channel 2 (863 aa).

Positions 1–10 (MDARGGGGRP) are enriched in gly residues. Positions 1–131 (MDARGGGGRP…AGPAGEPRGS (131 aa)) are disordered. Residues 1–188 (MDARGGGGRP…PYSDFRFYWD (188 aa)) are Cytoplasmic-facing. The span at 17–47 (TPAPGPPPPPPPPAPPQPQPPPAPPPNPTTP) shows a compositional bias: pro residues. The span at 106–128 (GAASGPAAAEEAGSEEAGPAGEP) shows a compositional bias: low complexity. 2 positions are modified to phosphoserine: S119 and S134. Positions 131 to 182 (SQASFLQRQFGALLQPGVNKFSLRMFGSQKAVEREQERVKSAGAWIIHPYSD) are involved in subunit assembly. A helical membrane pass occupies residues 189–209 (FTMLLFMVGNLIIIPVGITFF). At 210–213 (KDET) the chain is on the extracellular side. The chain crosses the membrane as a helical span at residues 214 to 234 (TAPWIVFNVVSDTFFLMDLVL). At 235–261 (NFRTGIVIEDNTEIILDPEKIKKKYLR) the chain is on the cytoplasmic side. A helical transmembrane segment spans residues 262–282 (TWFVVDFVSSIPVDYIFLIVE). The Extracellular portion of the chain corresponds to 283-290 (KGIDSEVY). A helical; Voltage-sensor membrane pass occupies residues 291 to 311 (KTARALRIVRFTKILSLLRLL). At 312–342 (RLSRLIRYIHQWEEIFHMTYDLASAVMRICN) the chain is on the cytoplasmic side. Residues 343-363 (LISMMLLLCHWDGCLQFLVPM) form a helical membrane-spanning segment. The Extracellular portion of the chain corresponds to 364–386 (LQDFPSDCWVSINNMVNHSWSEL). An N-linked (GlcNAc...) asparagine glycan is attached at N380. The segment at residues 387–408 (YSFALFKAMSHMLCIGYGRQAP) is an intramembrane region (pore-forming). Residues 409-413 (ESMTD) are Extracellular-facing. A helical membrane pass occupies residues 414–434 (IWLTMLSMIVGATCYAMFIGH). Over 435-863 (ATALIQSLDS…SARSRLSSNL (429 aa)) the chain is Cytoplasmic. The 3',5'-cyclic AMP site is built by G581, E582, C584, R591, T592, and R632. S641 carries the post-translational modification Phosphoserine; by PKG/PRKG2. Phosphoserine is present on S726. R728 bears the Omega-N-methylarginine mark. A disordered region spans residues 730–863 (VRRAPPGPLP…SARSRLSSNL (134 aa)). Positions 734–755 (PPGPLPPAASPGPPAASPPAAP) are enriched in pro residues. A phosphoserine mark is found at S743, S750, and S757. Composition is skewed to low complexity over residues 756–765 (SSPRAPRTSP) and 778–834 (PALP…AAPS). Phosphoserine occurs at positions 840, 842, and 847.

Belongs to the potassium channel HCN family. Homotetramer. The channel is composed of a homo- or heterotetrameric complex of pore-forming subunits. Heterotetramer with HCN1. Forms an obligate 4:4 complex with accessory subunit PEX5L. Interacts with KCNE2. In terms of processing, phosphorylation at Ser-641 by PRKG2 shifts the voltage-dependence to more negative voltages, hence counteracting the stimulatory effect of cGMP on gating. Post-translationally, N-glycosylated; required for cell surface trafficking of HCN2. S-palmitoylated. Highly expressed in neonatal and adult ventricle and in brain. Highly expressed in the pyramidal layer in hippocampus, in anterior dorsal nucleus in thalamus, in the mammillary nucleus in hypothalamus, in red nucleus, in trigeminal mesencephalic, spinal and principal nuclei, in cochlear and trapezoid nuclei and in the dorsal tegemental nucleus.

The protein resides in the cell membrane. The enzyme catalyses Na(+)(in) = Na(+)(out). The catalysed reaction is K(+)(in) = K(+)(out). It catalyses the reaction NH4(+)(in) = NH4(+)(out). With respect to regulation, activated by cAMP, and at 10-100 times higher concentrations, also by cGMP. cAMP binding causes a conformation change that leads to the assembly of an active tetramer and channel opening. In the absence of cAMP, the C-terminal region is thought to exert a tonic inhibition on the pore when HCN2 is in a non-tetrameric form. Channel activity is modulated by intracellular chloride ions and pH; acidic pH shifts the activation to more negative voltages. Phosphatidylinositol-4,5- bisphosphate (PIP(2)) acts as a ligand that allosterically opens HCN2 by shifting voltage-dependent channel activation toward depolarized potentials. Inhibited by extracellular cesium ions. Functionally, hyperpolarization-activated ion channel exhibiting weak selectivity for potassium over sodium ions. Contributes to the native pacemaker currents in heart (If) and in neurons (Ih). Can also transport ammonium in the distal nephron. Involved in the initiation of neuropathic pain in sensory neurons. Produces a large instantaneous current. This chain is Potassium/sodium hyperpolarization-activated cyclic nucleotide-gated channel 2 (Hcn2), found in Rattus norvegicus (Rat).